Here is a 396-residue protein sequence, read N- to C-terminus: Probable tRNA sulfurtransferase (396 aa).

The THUMP domain maps to 58–169 (NQFIEKLKMV…KKNIYVFTRS (112 aa)). ATP contacts are provided by residues 187–188 (LL), 212–213 (YF), Arg-269, Gly-291, and Gln-300.

This sequence belongs to the ThiI family.

The protein resides in the cytoplasm. The enzyme catalyses [ThiI sulfur-carrier protein]-S-sulfanyl-L-cysteine + a uridine in tRNA + 2 reduced [2Fe-2S]-[ferredoxin] + ATP + H(+) = [ThiI sulfur-carrier protein]-L-cysteine + a 4-thiouridine in tRNA + 2 oxidized [2Fe-2S]-[ferredoxin] + AMP + diphosphate. It carries out the reaction [ThiS sulfur-carrier protein]-C-terminal Gly-Gly-AMP + S-sulfanyl-L-cysteinyl-[cysteine desulfurase] + AH2 = [ThiS sulfur-carrier protein]-C-terminal-Gly-aminoethanethioate + L-cysteinyl-[cysteine desulfurase] + A + AMP + 2 H(+). It functions in the pathway cofactor biosynthesis; thiamine diphosphate biosynthesis. Catalyzes the ATP-dependent transfer of a sulfur to tRNA to produce 4-thiouridine in position 8 of tRNAs, which functions as a near-UV photosensor. Also catalyzes the transfer of sulfur to the sulfur carrier protein ThiS, forming ThiS-thiocarboxylate. This is a step in the synthesis of thiazole, in the thiamine biosynthesis pathway. The sulfur is donated as persulfide by IscS. The polypeptide is Probable tRNA sulfurtransferase (Halothermothrix orenii (strain H 168 / OCM 544 / DSM 9562)).